Reading from the N-terminus, the 163-residue chain is Transmembrane protein 278 (163 aa).

A disordered region spans residues 1 to 37 (MSEQGRETEEEEGGGGASDTAPMLPRGPPDHQASALT). 2 helical membrane-spanning segments follow: residues 51 to 71 (LLAG…LVLL) and 105 to 125 (AALI…ASAV). Pro residues predominate over residues 136–148 (LLPPPAGTPGPRR). The disordered stretch occupies residues 136–156 (LLPPPAGTPGPRRPPGRPDED).

Belongs to the TMEM88 family.

Its subcellular location is the membrane. This chain is Transmembrane protein 278, found in Homo sapiens (Human).